We begin with the raw amino-acid sequence, 610 residues long: UvrABC system protein C (610 aa).

Residues 16–94 enclose the GIY-YIG domain; it reads HQPGVYRMYN…IKQYLPKYNV (79 aa). Positions 204–239 constitute a UVR domain; sequence NQVLELLVQKMEIASQQLKFEDAAKFRDQIQAIRRV.

The protein belongs to the UvrC family. As to quaternary structure, interacts with UvrB in an incision complex.

It is found in the cytoplasm. Its function is as follows. The UvrABC repair system catalyzes the recognition and processing of DNA lesions. UvrC both incises the 5' and 3' sides of the lesion. The N-terminal half is responsible for the 3' incision and the C-terminal half is responsible for the 5' incision. The chain is UvrABC system protein C from Vibrio vulnificus (strain CMCP6).